A 345-amino-acid chain; its full sequence is tRNA pseudouridine synthase B (345 aa).

The Nucleophile role is filled by Asp-39.

The protein belongs to the pseudouridine synthase TruB family. Type 1 subfamily.

It catalyses the reaction uridine(55) in tRNA = pseudouridine(55) in tRNA. Responsible for synthesis of pseudouridine from uracil-55 in the psi GC loop of transfer RNAs. The polypeptide is tRNA pseudouridine synthase B (Rickettsia rickettsii (strain Iowa)).